The chain runs to 371 residues: Lipoyl synthase, mitochondrial (371 aa).

A mitochondrion-targeting transit peptide spans 1 to 24 (MLSRFKCSRLQLQKRAISVTKATT). Residues 20–29 (TKATTTTASQ) show a composition bias toward polar residues. A disordered region spans residues 20 to 42 (TKATTTTASQPKRRRTTTFSDAL). Cys-107, Cys-112, Cys-118, Cys-138, Cys-142, Cys-145, and Ser-353 together coordinate [4Fe-4S] cluster. The Radical SAM core domain maps to 121 to 342 (GGDSSKATAT…RDKALELGFL (222 aa)).

This sequence belongs to the radical SAM superfamily. Lipoyl synthase family. The cofactor is [4Fe-4S] cluster.

The protein resides in the mitochondrion. The catalysed reaction is [[Fe-S] cluster scaffold protein carrying a second [4Fe-4S](2+) cluster] + N(6)-octanoyl-L-lysyl-[protein] + 2 oxidized [2Fe-2S]-[ferredoxin] + 2 S-adenosyl-L-methionine + 4 H(+) = [[Fe-S] cluster scaffold protein] + N(6)-[(R)-dihydrolipoyl]-L-lysyl-[protein] + 4 Fe(3+) + 2 hydrogen sulfide + 2 5'-deoxyadenosine + 2 L-methionine + 2 reduced [2Fe-2S]-[ferredoxin]. It participates in protein modification; protein lipoylation via endogenous pathway; protein N(6)-(lipoyl)lysine from octanoyl-[acyl-carrier-protein]: step 2/2. Catalyzes the radical-mediated insertion of two sulfur atoms into the C-6 and C-8 positions of the octanoyl moiety bound to the lipoyl domains of lipoate-dependent enzymes, thereby converting the octanoylated domains into lipoylated derivatives. This Lachancea thermotolerans (strain ATCC 56472 / CBS 6340 / NRRL Y-8284) (Yeast) protein is Lipoyl synthase, mitochondrial.